The chain runs to 283 residues: N-terminal Xaa-Pro-Lys N-methyltransferase 2 (283 aa).

Residues glycine 124, arginine 129, aspartate 146, 174–175 (LQ), glutamine 190, and histidine 195 each bind S-adenosyl-L-methionine.

It belongs to the methyltransferase superfamily. NTM1 family.

The protein resides in the nucleus. It carries out the reaction N-terminal L-alanyl-L-prolyl-L-lysyl-[protein] + S-adenosyl-L-methionine = N-terminal N-methyl-L-alanyl-L-prolyl-L-lysyl-[protein] + S-adenosyl-L-homocysteine + H(+). The enzyme catalyses N-terminal L-prolyl-L-prolyl-L-lysyl-[protein] + S-adenosyl-L-methionine = N-terminal N-methyl-L-prolyl-L-prolyl-L-lysyl-[protein] + S-adenosyl-L-homocysteine + H(+). The catalysed reaction is N-terminal L-seryl-L-prolyl-L-lysyl-[protein] + S-adenosyl-L-methionine = N-terminal N-methyl-L-seryl-L-prolyl-L-lysyl-[protein] + S-adenosyl-L-homocysteine + H(+). In terms of biological role, alpha N-methyltransferase that methylates the N-terminus of target proteins containing the N-terminal motif [Ala/Pro/Ser]-Pro-Lys when the initiator Met is cleaved. Specifically catalyzes monomethylation of exposed alpha-amino group of Ala or Ser residue in the [Ala/Ser]-Pro-Lys motif and Pro in the Pro-Pro-Lys motif. Predominantly functions as a mono-methyltransferase but is also able to di-/tri-methylate the GPKRIA peptide and di-methylate the PPKRIA peptide (in vitro). May activate NTMT1 by priming its substrates for trimethylation. This is N-terminal Xaa-Pro-Lys N-methyltransferase 2 from Homo sapiens (Human).